Here is a 267-residue protein sequence, read N- to C-terminus: MTATSSPTTRFTDRVVLITGGGSGLGRATAVRLAAEGAKLSLVDVSSEGLEASKAAVLETAPDAEVLTTVADVSDEAQVEAYVTATTERFGRIDGFFNNAGIEGKQNPTESFTAAEFDKVVSINLRGVFLGLEKVLKIMREQGSGMVVNTASVGGIRGIGNQSGYAAAKHGVVGLTRNSAVEYGRYGIRINAIAPGAIWTPMVENSMKQLDPENPRKAAEEFIQVNPSKRYGEAPEIAAVVAFLLSDDASYVNATVVPIDGGQSAAY.

17 to 42 (LITGGGSGLGRATAVRLAAEGAKLSL) provides a ligand contact to NAD(+). Position 152 (S152) interacts with substrate. Y165 serves as the catalytic Proton acceptor.

The protein belongs to the short-chain dehydrogenases/reductases (SDR) family.

The catalysed reaction is (4R)-hydroxy-(6R)-2,2,6-trimethylcyclohexanone + NAD(+) = (6R)-2,2,6-trimethyl-1,4-cyclohexanedione + NADH + H(+). With respect to regulation, strongly activated by monovalent cations, such as K(+), Na(+), and NH4(+). Catalyzes the regio- and stereoselective reversible NAD-dependent reduction of (6R)-2,2,6-trimethyl-1,4-cyclohexanedione (levodione) to (4R,6R)-4-hydroxy-2,2,6-trimethylcyclohexanone (actinol). This Leifsonia aquatica (Corynebacterium aquaticum) protein is Levodione reductase (lvr).